The chain runs to 264 residues: tRNA (guanine-N(1)-)-methyltransferase (264 aa).

S-adenosyl-L-methionine is bound by residues Gly125 and 145–150 (LGDFVL).

This sequence belongs to the RNA methyltransferase TrmD family. In terms of assembly, homodimer.

Its subcellular location is the cytoplasm. The catalysed reaction is guanosine(37) in tRNA + S-adenosyl-L-methionine = N(1)-methylguanosine(37) in tRNA + S-adenosyl-L-homocysteine + H(+). In terms of biological role, specifically methylates guanosine-37 in various tRNAs. This Burkholderia vietnamiensis (strain G4 / LMG 22486) (Burkholderia cepacia (strain R1808)) protein is tRNA (guanine-N(1)-)-methyltransferase.